The chain runs to 105 residues: Pyrimidine/purine nucleoside phosphorylase (105 aa).

It belongs to the nucleoside phosphorylase PpnP family.

The enzyme catalyses a purine D-ribonucleoside + phosphate = a purine nucleobase + alpha-D-ribose 1-phosphate. It catalyses the reaction adenosine + phosphate = alpha-D-ribose 1-phosphate + adenine. It carries out the reaction cytidine + phosphate = cytosine + alpha-D-ribose 1-phosphate. The catalysed reaction is guanosine + phosphate = alpha-D-ribose 1-phosphate + guanine. The enzyme catalyses inosine + phosphate = alpha-D-ribose 1-phosphate + hypoxanthine. It catalyses the reaction thymidine + phosphate = 2-deoxy-alpha-D-ribose 1-phosphate + thymine. It carries out the reaction uridine + phosphate = alpha-D-ribose 1-phosphate + uracil. The catalysed reaction is xanthosine + phosphate = alpha-D-ribose 1-phosphate + xanthine. Its function is as follows. Catalyzes the phosphorolysis of diverse nucleosides, yielding D-ribose 1-phosphate and the respective free bases. Can use uridine, adenosine, guanosine, cytidine, thymidine, inosine and xanthosine as substrates. Also catalyzes the reverse reactions. This is Pyrimidine/purine nucleoside phosphorylase from Ralstonia nicotianae (strain ATCC BAA-1114 / GMI1000) (Ralstonia solanacearum).